The sequence spans 287 residues: DDRGK domain-containing protein 1 (287 aa).

At 1-5 (MDLIL) the chain is on the lumenal side. A helical membrane pass occupies residues 6 to 26 (LLGIAVALLVILVTLFFFTKG). Residues 27-287 (KGSQESGKYN…LINLVPVSAE (261 aa)) are Cytoplasmic-facing. 2 disordered regions span residues 28-102 (GSQE…KRAK) and 135-164 (KVEA…RQEH). Residues 44–68 (AQAAPRRAQVVRNQRNRARVAAAPA) show a composition bias toward low complexity. Residues 85–102 (IPHADFNGEKMGAKKRAK) are compositionally biased toward basic and acidic residues.

This sequence belongs to the DDRGK1 family. Interacts with Atg9; the interaction is transient.

It is found in the endoplasmic reticulum membrane. In terms of biological role, substrate adapter for ufmylation, the covalent attachment of the ubiquitin-like modifier UFM1 to substrate proteins. Required for ufmylation of Atg9; protects the nervous system during aging, possibly by stabilizing Atg9 and supporting its function. This chain is DDRGK domain-containing protein 1, found in Culex quinquefasciatus (Southern house mosquito).